A 752-amino-acid chain; its full sequence is Protein ORF24 (752 aa).

Belongs to the herpesviridae UL87 family. Interacts with ORF34.

Its function is as follows. Plays a role in the expression of late viral mRNAs together with ORF34. The protein is Protein ORF24 (ORF24) of Homo sapiens (Human).